A 273-amino-acid polypeptide reads, in one-letter code: 3-methyl-2-oxobutanoate hydroxymethyltransferase 3 (273 aa).

Mg(2+)-binding residues include D49 and D88. 3-methyl-2-oxobutanoate contacts are provided by residues 49 to 50 (DS), D88, and K118. E120 is a binding site for Mg(2+). E187 functions as the Proton acceptor in the catalytic mechanism.

The protein belongs to the PanB family. Homodecamer; pentamer of dimers. Mg(2+) is required as a cofactor.

It localises to the cytoplasm. It catalyses the reaction 3-methyl-2-oxobutanoate + (6R)-5,10-methylene-5,6,7,8-tetrahydrofolate + H2O = 2-dehydropantoate + (6S)-5,6,7,8-tetrahydrofolate. It functions in the pathway cofactor biosynthesis; (R)-pantothenate biosynthesis; (R)-pantoate from 3-methyl-2-oxobutanoate: step 1/2. Functionally, catalyzes the reversible reaction in which hydroxymethyl group from 5,10-methylenetetrahydrofolate is transferred onto alpha-ketoisovalerate to form ketopantoate. The chain is 3-methyl-2-oxobutanoate hydroxymethyltransferase 3 from Bradyrhizobium diazoefficiens (strain JCM 10833 / BCRC 13528 / IAM 13628 / NBRC 14792 / USDA 110).